The primary structure comprises 872 residues: Protein translocase subunit SecA (872 aa).

ATP is bound by residues glutamine 87, 105–109 (GEGKT), and aspartate 510. Positions 847, 849, 858, and 859 each coordinate Zn(2+).

Belongs to the SecA family. In terms of assembly, monomer and homodimer. Part of the essential Sec protein translocation apparatus which comprises SecA, SecYEG and auxiliary proteins SecDF-YajC and YidC. The cofactor is Zn(2+).

It localises to the cell inner membrane. Its subcellular location is the cytoplasm. It carries out the reaction ATP + H2O + cellular proteinSide 1 = ADP + phosphate + cellular proteinSide 2.. Functionally, part of the Sec protein translocase complex. Interacts with the SecYEG preprotein conducting channel. Has a central role in coupling the hydrolysis of ATP to the transfer of proteins into and across the cell membrane, serving as an ATP-driven molecular motor driving the stepwise translocation of polypeptide chains across the membrane. The polypeptide is Protein translocase subunit SecA (Aliarcobacter butzleri (strain RM4018) (Arcobacter butzleri)).